The chain runs to 382 residues: D-alanine--D-alanine ligase (382 aa).

The region spanning 161–372 (KVVFESAGLH…YAELIDELIH (212 aa)) is the ATP-grasp domain. 193–248 (VDRLGFPVFVKPARAGSSMGISKVDSLEGLDAAIEEARRHDLKLVIEAGIVGREIE) contributes to the ATP binding site. The Mg(2+) site is built by Asp-326, Glu-339, and Asn-341.

This sequence belongs to the D-alanine--D-alanine ligase family. Mg(2+) serves as cofactor. Mn(2+) is required as a cofactor.

The protein localises to the cytoplasm. It catalyses the reaction 2 D-alanine + ATP = D-alanyl-D-alanine + ADP + phosphate + H(+). Its pathway is cell wall biogenesis; peptidoglycan biosynthesis. Cell wall formation. The chain is D-alanine--D-alanine ligase from Pseudarthrobacter chlorophenolicus (strain ATCC 700700 / DSM 12829 / CIP 107037 / JCM 12360 / KCTC 9906 / NCIMB 13794 / A6) (Arthrobacter chlorophenolicus).